A 462-amino-acid chain; its full sequence is Fez family zinc finger protein 1 (462 aa).

Positions 34 to 49 (PLAFSIERIMSRTPEP) match the Engrailed homology 1 repressor motif. 6 consecutive C2H2-type zinc fingers follow at residues 260 to 282 (FTCE…MPVH), 288 to 310 (FVCK…KIIH), 316 to 338 (HKCN…TRIH), 344 to 366 (FVCE…KLTH), 372 to 394 (FKCN…MHTH), and 400 to 423 (FTCP…RKLH). The segment at 441–462 (LLLPNREPSPTIQSPQLQKSGY) is disordered. Positions 448-462 (PSPTIQSPQLQKSGY) are enriched in polar residues.

Belongs to the krueppel C2H2-type zinc-finger protein family.

It localises to the nucleus. Functionally, transcription repressor. Involved in the development of the forebrain region. This Xenopus tropicalis (Western clawed frog) protein is Fez family zinc finger protein 1 (fezf1).